Reading from the N-terminus, the 198-residue chain is 7-methyl-GTP pyrophosphatase (198 aa).

Asp-69 functions as the Proton acceptor in the catalytic mechanism.

It belongs to the Maf family. YceF subfamily. A divalent metal cation serves as cofactor.

It is found in the cytoplasm. The enzyme catalyses N(7)-methyl-GTP + H2O = N(7)-methyl-GMP + diphosphate + H(+). Its function is as follows. Nucleoside triphosphate pyrophosphatase that hydrolyzes 7-methyl-GTP (m(7)GTP). May have a dual role in cell division arrest and in preventing the incorporation of modified nucleotides into cellular nucleic acids. The protein is 7-methyl-GTP pyrophosphatase of Yersinia pseudotuberculosis serotype I (strain IP32953).